A 110-amino-acid chain; its full sequence is Iron-sulfur cluster insertion protein ErpA (110 aa).

Cys-38, Cys-102, and Cys-104 together coordinate iron-sulfur cluster.

It belongs to the HesB/IscA family. Homodimer. Requires iron-sulfur cluster as cofactor.

Required for insertion of 4Fe-4S clusters for at least IspG. This chain is Iron-sulfur cluster insertion protein ErpA, found in Marinobacter nauticus (strain ATCC 700491 / DSM 11845 / VT8) (Marinobacter aquaeolei).